Consider the following 626-residue polypeptide: MYQGHMQKSKEQGYGKLSSDEDLEIIVDQKQGKGSRAADKAVAMVMKEIPREESAEEKPLLTMTSQLVNEQQESRPLLSPSIDDFLCETKSEAIARPVTSNTAVLTTGLDLLDLSEPVSQTQTKAKKSEPSSKTSSLKKKADGSDLISTDAEQRGQPLRVPETSSLDLDIQTQLEKWDDVKFHGDRNTKGHPMAERKSSSSRTGSKELLWSSEHRSQPELSGGKSALNSESASELELVAPTQARLTKEHRWGSALLSRNHSLEEEFERAKAAVESDTEFWDKMQAEWEEMARRNWISENQEAQNQVTISASEKGYYFHTENPFKDWPGAFEEGLKRLKEGDLPVTILFMEAAILQDPGDAEAWQFLGITQAENENEQAAIVALQRCLELQPNNLKALMALAVSYTNTGHQQDACDALKNWIKQNPKYKYLVKSKKGSPGLTRRMSKSPVDSSVLEGVKELYLEAAHQNGDMIDPDLQTGLGVLFHLSGEFNRAIDAFNAALTVRPEDYSLWNRLGATLANGDRSEEAVEAYTRALEIQPGFIRSRYNLGISCINLGAYREAVSNFLTALSLQRKSRNQQQVPHPAISGNIWAALRIALSLMDQPELFQAANLGDLDVLLRAFNLDP.

Disordered regions lie at residues 1–20 (MYQGHMQKSKEQGYGKLSSD), 118–167 (VSQT…SSLD), and 181–235 (KFHG…ASEL). Residues 181–198 (KFHGDRNTKGHPMAERKS) are compositionally biased toward basic and acidic residues. The residue at position 205 (Ser205) is a Phosphoserine. Over residues 225-235 (SALNSESASEL) the composition is skewed to low complexity. Phosphoserine occurs at positions 253, 257, and 261. TPR repeat units lie at residues 326-359 (WPGAFEEGLKRLKEGDLPVTILFMEAAILQDPGD), 360-393 (AEAWQFLGITQAENENEQAAIVALQRCLELQPNN), and 395-427 (KALMALAVSYTNTGHQQDACDALKNWIKQNPKY). Phosphoserine occurs at positions 445 and 447. TPR repeat units lie at residues 474-507 (PDLQTGLGVLFHLSGEFNRAIDAFNAALTVRPED), 509-541 (SLWNRLGATLANGDRSEEAVEAYTRALEIQPGF), and 543-575 (RSRYNLGISCINLGAYREAVSNFLTALSLQRKS).

This sequence belongs to the peroxisomal targeting signal receptor family. In terms of assembly, interacts with RAB8B. Forms an obligate 4:4 complex with HCN2. May interact with the C-terminal PTS1-type tripeptide peroxisomal targeting signal (SKL-type); the relevance of such interaction is however unclear. Interacts with HCN3. Interacts with HCN4 with a 4:4 HCN4:PEX5L stoichiometry; reduces the effects of cAMP on the voltage-dependence and rate of activation of HCN4. Mainly expressed in brain. Also expressed in pancreas, testis and pituitary.

The protein resides in the cytoplasm. The protein localises to the membrane. Its function is as follows. Accessory subunit of hyperpolarization-activated cyclic nucleotide-gated (HCN) channels, regulating their cell-surface expression and cyclic nucleotide dependence. The polypeptide is PEX5-related protein (PEX5L) (Homo sapiens (Human)).